Consider the following 285-residue polypeptide: 2-dehydro-3-deoxyphosphooctonate aldolase (285 aa).

Belongs to the KdsA family.

Its subcellular location is the cytoplasm. It carries out the reaction D-arabinose 5-phosphate + phosphoenolpyruvate + H2O = 3-deoxy-alpha-D-manno-2-octulosonate-8-phosphate + phosphate. It functions in the pathway carbohydrate biosynthesis; 3-deoxy-D-manno-octulosonate biosynthesis; 3-deoxy-D-manno-octulosonate from D-ribulose 5-phosphate: step 2/3. Its pathway is bacterial outer membrane biogenesis; lipopolysaccharide biosynthesis. The chain is 2-dehydro-3-deoxyphosphooctonate aldolase from Leptothrix cholodnii (strain ATCC 51168 / LMG 8142 / SP-6) (Leptothrix discophora (strain SP-6)).